A 228-amino-acid polypeptide reads, in one-letter code: SPbeta prophage-derived uncharacterized protein YomL (228 aa).

The N-terminal stretch at 1-28 (MRKKRVITCVMAASLTLGSLLPAGYATA) is a signal peptide.

The protein is SPbeta prophage-derived uncharacterized protein YomL (yomL) of Bacillus subtilis (strain 168).